Consider the following 235-residue polypeptide: Uracil-DNA glycosylase (235 aa).

The Proton acceptor role is filled by Asp71.

This sequence belongs to the uracil-DNA glycosylase (UDG) superfamily. UNG family.

It is found in the cytoplasm. It carries out the reaction Hydrolyzes single-stranded DNA or mismatched double-stranded DNA and polynucleotides, releasing free uracil.. Its function is as follows. Excises uracil residues from the DNA which can arise as a result of misincorporation of dUMP residues by DNA polymerase or due to deamination of cytosine. The polypeptide is Uracil-DNA glycosylase (Helicobacter hepaticus (strain ATCC 51449 / 3B1)).